We begin with the raw amino-acid sequence, 284 residues long: 4-diphosphocytidyl-2-C-methyl-D-erythritol kinase (284 aa).

Residue Lys14 is part of the active site. Residue Pro98 to Ser108 coordinates ATP. The active site involves Asp140.

This sequence belongs to the GHMP kinase family. IspE subfamily.

The enzyme catalyses 4-CDP-2-C-methyl-D-erythritol + ATP = 4-CDP-2-C-methyl-D-erythritol 2-phosphate + ADP + H(+). The protein operates within isoprenoid biosynthesis; isopentenyl diphosphate biosynthesis via DXP pathway; isopentenyl diphosphate from 1-deoxy-D-xylulose 5-phosphate: step 3/6. Its function is as follows. Catalyzes the phosphorylation of the position 2 hydroxy group of 4-diphosphocytidyl-2C-methyl-D-erythritol. In Shewanella oneidensis (strain ATCC 700550 / JCM 31522 / CIP 106686 / LMG 19005 / NCIMB 14063 / MR-1), this protein is 4-diphosphocytidyl-2-C-methyl-D-erythritol kinase.